We begin with the raw amino-acid sequence, 384 residues long: 1-deoxy-D-xylulose 5-phosphate reductoisomerase (384 aa).

The NADPH site is built by Thr10, Gly11, Ser12, Ile13, Asn38, and Asn120. Lys121 lines the 1-deoxy-D-xylulose 5-phosphate pocket. Position 122 (Glu122) interacts with NADPH. Asp146 lines the Mn(2+) pocket. 1-deoxy-D-xylulose 5-phosphate contacts are provided by Ser147, Glu148, Ser172, and His195. Mn(2+) is bound at residue Glu148. Position 201 (Gly201) interacts with NADPH. Positions 208, 213, 214, and 217 each coordinate 1-deoxy-D-xylulose 5-phosphate. Glu217 serves as a coordination point for Mn(2+).

It belongs to the DXR family. The cofactor is Mg(2+). It depends on Mn(2+) as a cofactor.

The catalysed reaction is 2-C-methyl-D-erythritol 4-phosphate + NADP(+) = 1-deoxy-D-xylulose 5-phosphate + NADPH + H(+). It functions in the pathway isoprenoid biosynthesis; isopentenyl diphosphate biosynthesis via DXP pathway; isopentenyl diphosphate from 1-deoxy-D-xylulose 5-phosphate: step 1/6. In terms of biological role, catalyzes the NADPH-dependent rearrangement and reduction of 1-deoxy-D-xylulose-5-phosphate (DXP) to 2-C-methyl-D-erythritol 4-phosphate (MEP). In Protochlamydia amoebophila (strain UWE25), this protein is 1-deoxy-D-xylulose 5-phosphate reductoisomerase.